Reading from the N-terminus, the 428-residue chain is Cytokine-dependent hematopoietic cell linker (428 aa).

Residues 1 to 22 (MNRQGNRKTTKEGSNDLKFQNF) form a disordered region. 2 positions are modified to phosphotyrosine; by LYN: Tyr-69 and Tyr-96. Disordered regions lie at residues 135-198 (DKPI…EVQR) and 244-271 (SSSF…PQRC). The tract at residues 159-164 (PLPPPR) is mediates interaction with PLCG1; essential for BCR signaling; involved in restoration of BCR-induced calcium response and ERK2 and JNK2 activation in BLNK-deficient cells expressing LAT. Positions 178–180 (PEP) are mediates interaction with LAT, GRB2, and FGR; involved in translocation to the glycolipid-enriched microdomain and restoration of BCR-induced calcium response in BLNK-deficient DT40 cells expressing LAT. The span at 244–253 (SSSFTTSNHS) shows a compositional bias: low complexity. An SH2 domain is found at 309–419 (WYIGEYSRQA…RKQCHLTQPL (111 aa)).

When phosphorylated, interacts with PLCG1, PLCG2, GRB2, VAV and LAT. Interacts with LBR and AGO2. Interacts with FGR. Part of a complex consisting of CLNK, SKAP1 and FYB1. Interacts (via SH2 domain) with FYB1; this interaction allows SKAP1 and FYB1 to promote tyrosine phosphorylation of CLNK by LYN. Interacts (via SH2 domain) with MAP4K1. In terms of processing, tyrosine-phosphorylated upon BCR cross-linking. Tyrosine phosphorylation at both Tyr-69 and Tyr-96 are required for BCR-induced calcium response and are essential to restore PLCG2-mediated signaling in BLNK-deficient DT40 cells, but this phosphorylation is dispensable in cells expressing LAT. Interacts with the SH2 domain of PLCG1 via phosphorylated Tyr-96. Tyrosine phosphorylation is increased when complexed with SKAP1 and FYB1.

The protein resides in the cytoplasm. In terms of biological role, an adapter protein which plays a role in the regulation of immunoreceptor signaling, including PLC-gamma-mediated B-cell antigen receptor (BCR) signaling and FC-epsilon R1-mediated mast cell degranulation. Together with FGR, it acts as a negative regulator of natural killer cell-activating receptors and inhibits interferon-gamma production. Acts as a positive regulator of both T-cell receptor and natural killer T (NKT) cell receptor signaling in CD4-positive NKT cells. Together with MAP4K1, it enhances CD3-triggered activation of T-cells and subsequent IL2 production. May be involved in tumor necrosis factor induced cell death by promoting reactive oxidative species generation, and MLKL oligomerization, ultimately leading to necrosis. Involved in phosphorylation of LAT. May be involved in high affinity immunoglobulin epsilon receptor signaling in mast cells. This Homo sapiens (Human) protein is Cytokine-dependent hematopoietic cell linker (CLNK).